A 204-amino-acid chain; its full sequence is UPF0637 protein lin1053 (204 aa).

The protein belongs to the UPF0637 family.

The polypeptide is UPF0637 protein lin1053 (Listeria innocua serovar 6a (strain ATCC BAA-680 / CLIP 11262)).